We begin with the raw amino-acid sequence, 351 residues long: Photosystem II D2 protein (351 aa).

A helical transmembrane segment spans residues Thr-39–Thr-59. His-116 is a binding site for chlorophyll a. The chain crosses the membrane as a helical span at residues Gly-123–Pro-139. Residues Gln-128 and Asn-141 each contribute to the pheophytin a site. The chain crosses the membrane as a helical span at residues Val-151–Ser-164. Residue His-196 participates in chlorophyll a binding. The helical transmembrane segment at Gly-206–Glu-226 threads the bilayer. 2 residues coordinate a plastoquinone: His-213 and Phe-260. Residue His-213 participates in Fe cation binding. Fe cation is bound at residue His-267. Residues Gly-277–Arg-293 traverse the membrane as a helical segment.

The protein belongs to the reaction center PufL/M/PsbA/D family. As to quaternary structure, PSII is composed of 1 copy each of membrane proteins PsbA, PsbB, PsbC, PsbD, PsbE, PsbF, PsbH, PsbI, PsbJ, PsbK, PsbL, PsbM, PsbT, PsbX, PsbY, PsbZ, Psb30/Ycf12, peripheral proteins PsbO, CyanoQ (PsbQ), PsbU, PsbV and a large number of cofactors. It forms dimeric complexes. Requires The D1/D2 heterodimer binds P680, chlorophylls that are the primary electron donor of PSII, and subsequent electron acceptors. It shares a non-heme iron and each subunit binds pheophytin, quinone, additional chlorophylls, carotenoids and lipids. There is also a Cl(-1) ion associated with D1 and D2, which is required for oxygen evolution. The PSII complex binds additional chlorophylls, carotenoids and specific lipids. as cofactor.

The protein localises to the cellular thylakoid membrane. It carries out the reaction 2 a plastoquinone + 4 hnu + 2 H2O = 2 a plastoquinol + O2. Its function is as follows. Photosystem II (PSII) is a light-driven water:plastoquinone oxidoreductase that uses light energy to abstract electrons from H(2)O, generating O(2) and a proton gradient subsequently used for ATP formation. It consists of a core antenna complex that captures photons, and an electron transfer chain that converts photonic excitation into a charge separation. The D1/D2 (PsbA/PsbD) reaction center heterodimer binds P680, the primary electron donor of PSII as well as several subsequent electron acceptors. D2 is needed for assembly of a stable PSII complex. In Synechococcus sp. (strain CC9311), this protein is Photosystem II D2 protein.